A 363-amino-acid chain; its full sequence is 3-isopropylmalate dehydrogenase (363 aa).

An NAD(+)-binding site is contributed by 79–92; sequence GPKWEHLPPNDQPE. Arginine 100, arginine 110, arginine 139, and aspartate 228 together coordinate substrate. Positions 228, 252, and 256 each coordinate Mg(2+). Residue 286–298 participates in NAD(+) binding; that stretch reads GSAPDIAGKNIAN.

Belongs to the isocitrate and isopropylmalate dehydrogenases family. LeuB type 1 subfamily. Homodimer. The cofactor is Mg(2+). Requires Mn(2+) as cofactor.

The protein resides in the cytoplasm. It catalyses the reaction (2R,3S)-3-isopropylmalate + NAD(+) = 4-methyl-2-oxopentanoate + CO2 + NADH. It participates in amino-acid biosynthesis; L-leucine biosynthesis; L-leucine from 3-methyl-2-oxobutanoate: step 3/4. Functionally, catalyzes the oxidation of 3-carboxy-2-hydroxy-4-methylpentanoate (3-isopropylmalate) to 3-carboxy-4-methyl-2-oxopentanoate. The product decarboxylates to 4-methyl-2 oxopentanoate. The chain is 3-isopropylmalate dehydrogenase from Vibrio parahaemolyticus serotype O3:K6 (strain RIMD 2210633).